A 346-amino-acid polypeptide reads, in one-letter code: Selenide, water dikinase (346 aa).

Selenocysteine 16 is a catalytic residue. Residue selenocysteine 16 is a non-standard amino acid, selenocysteine. ATP contacts are provided by residues lysine 19 and 47–49; that span reads TAD. Mg(2+) is bound at residue aspartate 50. ATP contacts are provided by residues aspartate 67, aspartate 90, and 138–140; that span reads GHS. Mg(2+) is bound at residue aspartate 90. Position 226 (aspartate 226) interacts with Mg(2+).

The protein belongs to the selenophosphate synthase 1 family. Class I subfamily. As to quaternary structure, homodimer. Mg(2+) serves as cofactor.

The catalysed reaction is hydrogenselenide + ATP + H2O = selenophosphate + AMP + phosphate + 2 H(+). Functionally, synthesizes selenophosphate from selenide and ATP. This is Selenide, water dikinase from Haemophilus influenzae (strain ATCC 51907 / DSM 11121 / KW20 / Rd).